The sequence spans 226 residues: uncharacterized protein (226 aa).

Disordered regions lie at residues M1–T20 and L205–A226.

This is an uncharacterized protein from Treponema pallidum (strain Nichols).